The chain runs to 475 residues: ATP synthase subunit beta (475 aa).

Residue 161–168 (GGAGVGKT) participates in ATP binding.

Belongs to the ATPase alpha/beta chains family. F-type ATPases have 2 components, CF(1) - the catalytic core - and CF(0) - the membrane proton channel. CF(1) has five subunits: alpha(3), beta(3), gamma(1), delta(1), epsilon(1). CF(0) has three main subunits: a(1), b(2) and c(9-12). The alpha and beta chains form an alternating ring which encloses part of the gamma chain. CF(1) is attached to CF(0) by a central stalk formed by the gamma and epsilon chains, while a peripheral stalk is formed by the delta and b chains.

It is found in the cell membrane. The catalysed reaction is ATP + H2O + 4 H(+)(in) = ADP + phosphate + 5 H(+)(out). Functionally, produces ATP from ADP in the presence of a proton gradient across the membrane. The catalytic sites are hosted primarily by the beta subunits. This Mycoplasma mycoides subsp. mycoides SC (strain CCUG 32753 / NCTC 10114 / PG1) protein is ATP synthase subunit beta.